The primary structure comprises 953 residues: Atromentin synthetase invA5 (953 aa).

Residues 37–460 form an adenylation (A) domain region; sequence SRAVSQYPDH…SGRIKDTVIV (424 aa). The 79-residue stretch at 592 to 670 folds into the Carrier domain; sequence APSTETEKTL…SLAKYVDSLI (79 aa). The tract at residues 597-667 is thiolation and peptide carrier (T) domain; sequence TEKTLAGIYA…VISSLAKYVD (71 aa). At serine 629 the chain carries O-(pantetheine 4'-phosphoryl)serine. The tract at residues 693–795 is thioesterase (TE) domain; the sequence is PIFMVHPGVG…FTGLINIPPN (103 aa).

Belongs to the ATP-dependent AMP-binding enzyme family.

Its pathway is secondary metabolite biosynthesis. In terms of biological role, an L-tyrosine:2-oxoglutarate aminotransferase (probably invD) and atromentin synthetase invA5 catalyze consecutive steps to turn over L-tyrosine into atromentin, which represents the generic precursor molecule for the entire terphenylquinone and pulvinic acid family of pigments, which are widely distributed secondary metabolites in homobasidiomycetes. The first step catalyzed by the aminotransferase converts L-tyrosine in to 4-hydroxyphenylpyruvate (4-HPP). Adenylation of two 4-HPP monomers by the invA5 adenylation (A) domain, covalent tethering of the monomers as a thioester and oxoester onto the invA5 thiolation (T) and thioesterase (TE) domains, respectively, and symmetric C-C-bond formation between two monomers catalyzed by the invA5 TE domain leads to atromentin. In Paxillus involutus (Naked brimcap), this protein is Atromentin synthetase invA5 (invA5).